A 416-amino-acid chain; its full sequence is Gap junction alpha-3 protein (416 aa).

Residues Gly2–Gln15 lie within the membrane without spanning it. At Glu16–Thr19 the chain is on the cytoplasmic side. A helical membrane pass occupies residues Val20–Ala40. Residues Ala41 to Pro71 lie on the Extracellular side of the membrane. 3 disulfides stabilise this stretch: Cys54–Cys198, Cys61–Cys192, and Cys65–Cys187. A helical transmembrane segment spans residues Ile72–Tyr92. Topologically, residues Leu93–Asn158 are cytoplasmic. Basic and acidic residues predominate over residues Glu110–Met128. Residues Glu110–Asp141 are disordered. The helical transmembrane segment at Ile159–Phe179 threads the bilayer. The Extracellular segment spans residues Gln180 to Thr207. Residues Ile208–Ile228 form a helical membrane-spanning segment. The Cytoplasmic segment spans residues Tyr229–Ile416. The tract at residues Gly336 to Ile416 is disordered. A compositionally biased stretch (low complexity) spans Pro342–Pro353.

Belongs to the connexin family. Alpha-type (group II) subfamily. A hemichannel or connexon is composed of a hexamer of connexins. A functional gap junction is formed by the apposition of two hemichannels. Forms heteromeric channels with GJA8. Detected in eye lens (at protein level). Most abundant in lens, but also present in heart and kidney.

Its subcellular location is the cell membrane. The protein resides in the cell junction. It localises to the gap junction. Functionally, structural component of lens fiber gap junctions. Gap junctions are dodecameric channels that connect the cytoplasm of adjoining cells. They are formed by the docking of two hexameric hemichannels, one from each cell membrane. Small molecules and ions diffuse from one cell to a neighboring cell via the central pore. The sequence is that of Gap junction alpha-3 protein (Gja3) from Rattus norvegicus (Rat).